Reading from the N-terminus, the 331-residue chain is Tryptophan--tRNA ligase (331 aa).

Residues Q10–S12 and G18–N19 contribute to the ATP site. The 'HIGH' region motif lies at P11–N19. D133 is a binding site for L-tryptophan. Residues G145–D147, V184, and K193–S197 contribute to the ATP site. Positions K193–S197 match the 'KMSKS' region motif.

The protein belongs to the class-I aminoacyl-tRNA synthetase family. As to quaternary structure, homodimer.

The protein localises to the cytoplasm. The catalysed reaction is tRNA(Trp) + L-tryptophan + ATP = L-tryptophyl-tRNA(Trp) + AMP + diphosphate + H(+). Functionally, catalyzes the attachment of tryptophan to tRNA(Trp). The protein is Tryptophan--tRNA ligase of Listeria innocua serovar 6a (strain ATCC BAA-680 / CLIP 11262).